A 427-amino-acid chain; its full sequence is 3-phosphoshikimate 1-carboxyvinyltransferase (427 aa).

3-phosphoshikimate is bound by residues Lys-22, Ser-23, and Arg-27. Lys-22 is a binding site for phosphoenolpyruvate. 2 residues coordinate phosphoenolpyruvate: Gly-96 and Arg-124. Residues Ser-169, Ser-170, Gln-171, Ser-197, Asp-313, Asn-336, and Lys-340 each contribute to the 3-phosphoshikimate site. Gln-171 provides a ligand contact to phosphoenolpyruvate. Asp-313 acts as the Proton acceptor in catalysis. Positions 344, 386, and 411 each coordinate phosphoenolpyruvate.

This sequence belongs to the EPSP synthase family. As to quaternary structure, monomer.

The protein localises to the cytoplasm. The enzyme catalyses 3-phosphoshikimate + phosphoenolpyruvate = 5-O-(1-carboxyvinyl)-3-phosphoshikimate + phosphate. The protein operates within metabolic intermediate biosynthesis; chorismate biosynthesis; chorismate from D-erythrose 4-phosphate and phosphoenolpyruvate: step 6/7. Catalyzes the transfer of the enolpyruvyl moiety of phosphoenolpyruvate (PEP) to the 5-hydroxyl of shikimate-3-phosphate (S3P) to produce enolpyruvyl shikimate-3-phosphate and inorganic phosphate. The protein is 3-phosphoshikimate 1-carboxyvinyltransferase of Klebsiella pneumoniae subsp. pneumoniae (strain ATCC 700721 / MGH 78578).